We begin with the raw amino-acid sequence, 161 residues long: Large ribosomal subunit protein bL17 (161 aa).

The interval 126–161 (TAAKKAPKTRRSRKKATASVAEAPTAEAASEEKAAE) is disordered. The segment covering 130 to 141 (KAPKTRRSRKKA) has biased composition (basic residues). The segment covering 142 to 153 (TASVAEAPTAEA) has biased composition (low complexity).

The protein belongs to the bacterial ribosomal protein bL17 family. In terms of assembly, part of the 50S ribosomal subunit. Contacts protein L32.

The sequence is that of Large ribosomal subunit protein bL17 from Parabacteroides distasonis (strain ATCC 8503 / DSM 20701 / CIP 104284 / JCM 5825 / NCTC 11152).